Consider the following 341-residue polypeptide: Probable alcohol acetyltransferase (341 aa).

The transit peptide at 1 to 40 (MFASRILRNSAQTLKTELPHKETIKMAYDLHKPRSTAIRH) directs the protein to the mitochondrion. Residues 48–301 (PILFLHGIFG…NSNHDILDQR (254 aa)) enclose the AB hydrolase-1 domain. Catalysis depends on charge relay system residues S121, D145, and H295.

This sequence belongs to the AB hydrolase superfamily.

The protein localises to the mitochondrion. In terms of biological role, probable alcohol acetyltransferase that uses acetyl-CoA to synthesize acetate esters from various alcohols. Not involved in the synthesis of ethyl acetate. This chain is Probable alcohol acetyltransferase (EAT2), found in Wickerhamomyces anomalus (strain ATCC 58044 / CBS 1984 / NCYC 433 / NRRL Y-366-8) (Yeast).